The primary structure comprises 408 residues: Intracellular coagulation inhibitor 2 (408 aa).

The N-terminal stretch at 1–22 (MLSRRTLDCCLVMLIVSTTFCQ) is a signal peptide. A disulfide bridge links cysteine 50 with cysteine 249. N-linked (GlcNAc...) asparagine glycosylation is present at asparagine 174.

It belongs to the serpin family. In terms of assembly, monomer. Forms a covalent heterodimer with clotting factor C chain B. Forms a covalent heterodimer with proclotting enzyme heavy chain. Specifically expressed in hemocytes (at protein level).

It localises to the secreted. Serine protease inhibitor that inhibits proclotting enzyme and to a lesser extent clotting factor C and clotting factor G. The protein is Intracellular coagulation inhibitor 2 of Tachypleus tridentatus (Japanese horseshoe crab).